The chain runs to 168 residues: Protein-export protein SecB (168 aa).

The protein belongs to the SecB family. Homotetramer, a dimer of dimers. One homotetramer interacts with 1 SecA dimer.

The protein localises to the cytoplasm. One of the proteins required for the normal export of preproteins out of the cell cytoplasm. It is a molecular chaperone that binds to a subset of precursor proteins, maintaining them in a translocation-competent state. It also specifically binds to its receptor SecA. The sequence is that of Protein-export protein SecB from Rhizobium meliloti (strain 1021) (Ensifer meliloti).